We begin with the raw amino-acid sequence, 223 residues long: Ras-related protein Rab-37 (223 aa).

The tract at residues 1–23 is disordered; the sequence is MTGTPGAVATRDGEAPERSPPCS. The residue at position 2 (T2) is an N-acetylthreonine. 8 residues coordinate GTP: T38, G39, V40, G41, K42, T43, C44, and T62. A Mg(2+)-binding site is contributed by T43. 2 consecutive short sequence motifs (switch) follow at residues 52–67 and 85–102; these read GAFL…GIDF and DTAG…YYRD. The Mg(2+) site is built by T62 and D85. The GTP site is built by G88, N143, K144, D146, M147, S173, A174, and K175. Residues C219 and C220 are each lipidated (S-geranylgeranyl cysteine). The residue at position 220 (C220) is a Cysteine methyl ester. Positions 221–223 are cleaved as a propeptide — removed in mature form; sequence SFM.

Belongs to the small GTPase superfamily. Rab family. As to quaternary structure, interacts with RIMS1. Interacts (in GDP-bound form) with RPGR, RPGR functions as guanine exchange factor (GEF). Mg(2+) is required as a cofactor.

The protein localises to the cytoplasmic vesicle. It is found in the cell projection. The protein resides in the cilium. It carries out the reaction GTP + H2O = GDP + phosphate + H(+). Its activity is regulated as follows. Regulated by guanine nucleotide exchange factors (GEFs) including RPGR which promote the exchange of bound GDP for free GTP. Regulated by GTPase activating proteins (GAPs) which increase the GTP hydrolysis activity. Inhibited by GDP dissociation inhibitors (GDIs). Functionally, the small GTPases Rab are key regulators of intracellular membrane trafficking, from the formation of transport vesicles to their fusion with membranes. Rabs cycle between an inactive GDP-bound form and an active GTP-bound form that is able to recruit to membranes different sets of downstream effectors directly responsible for vesicle formation, movement, tethering and fusion. Acts as an organizer for autophagosome biogenesis in a GTP-dependent manner. Involved in retinal homeostasis by autophagy regulation. This chain is Ras-related protein Rab-37, found in Homo sapiens (Human).